The chain runs to 931 residues: Isoleucine--tRNA ligase (931 aa).

The 'HIGH' region signature appears at 58-68; it reads PYANGHLHCGH. Glu559 contributes to the L-isoleucyl-5'-AMP binding site. The 'KMSKS' region signature appears at 600–604; that stretch reads KLSKS. Lys603 provides a ligand contact to ATP. 4 residues coordinate Zn(2+): Cys894, Cys897, Cys914, and Cys917.

Belongs to the class-I aminoacyl-tRNA synthetase family. IleS type 1 subfamily. As to quaternary structure, monomer. Zn(2+) serves as cofactor.

The protein resides in the cytoplasm. The enzyme catalyses tRNA(Ile) + L-isoleucine + ATP = L-isoleucyl-tRNA(Ile) + AMP + diphosphate. Functionally, catalyzes the attachment of isoleucine to tRNA(Ile). As IleRS can inadvertently accommodate and process structurally similar amino acids such as valine, to avoid such errors it has two additional distinct tRNA(Ile)-dependent editing activities. One activity is designated as 'pretransfer' editing and involves the hydrolysis of activated Val-AMP. The other activity is designated 'posttransfer' editing and involves deacylation of mischarged Val-tRNA(Ile). The sequence is that of Isoleucine--tRNA ligase from Legionella pneumophila (strain Paris).